Reading from the N-terminus, the 452-residue chain is Maltoporin (452 aa).

The first 25 residues, 1–25 (MMITLRKLPLAVAVAAGVMSAQAMA), serve as a signal peptide directing secretion.

The protein belongs to the porin LamB (TC 1.B.3) family. As to quaternary structure, homotrimer formed of three 18-stranded antiparallel beta-barrels, containing three independent channels.

It localises to the cell outer membrane. It carries out the reaction beta-maltose(in) = beta-maltose(out). Its function is as follows. Involved in the transport of maltose and maltodextrins. In Salmonella agona (strain SL483), this protein is Maltoporin.